The primary structure comprises 398 residues: Flavohemoprotein (398 aa).

One can recognise a Globin domain in the interval 9 to 147 (QLTPAQIKII…LAKLLIDLEA (139 aa)). H93 is a binding site for heme b. Residues Y103 and E146 each act as charge relay system in the active site. Positions 155 to 398 (WRWFKDFKVT…KLEYFGPYDP (244 aa)) are reductase. One can recognise an FAD-binding FR-type domain in the interval 156 to 263 (RWFKDFKVTR…APPAGNFVYD (108 aa)). Residues Y196 and 212–215 (REYS) each bind FAD. Residue 276 to 281 (GIGITP) coordinates NADP(+). 395 to 398 (PYDP) is a binding site for FAD.

Belongs to the globin family. It depends on FAD as a cofactor. Heme b serves as cofactor.

The protein resides in the cytoplasm. It catalyses the reaction 2 nitric oxide + NADPH + 2 O2 = 2 nitrate + NADP(+) + H(+). It carries out the reaction 2 nitric oxide + NADH + 2 O2 = 2 nitrate + NAD(+) + H(+). Its activity is regulated as follows. Inhibited by imidazoles. Nitric oxide dioxygenase involved in NO detoxification in an aerobic process, termed nitric oxide dioxygenase (NOD) reaction that utilizes O(2) and NAD(P)H to convert NO to nitrate, which protects the fungus from various noxious nitrogen compounds. Therefore, plays a central role in the inducible response to nitrosative stress. Plays a role in virulence since nitric oxide is generated by macrophages of the host immune system. The protein is Flavohemoprotein (YHB1) of Candida albicans (strain SC5314 / ATCC MYA-2876) (Yeast).